The sequence spans 304 residues: Haloalkane dehalogenase (304 aa).

An AB hydrolase-1 domain is found at 42-154 (PIVFLHGNPT…DSVDLSPEFV (113 aa)). Asp114 serves as the catalytic Nucleophile. Residue Glu138 is the Proton donor of the active site. Residue His280 is the Proton acceptor of the active site.

Belongs to the haloalkane dehalogenase family. Type 2 subfamily. In terms of assembly, monomer.

It carries out the reaction 1-haloalkane + H2O = a halide anion + a primary alcohol + H(+). Functionally, catalyzes hydrolytic cleavage of carbon-halogen bonds in halogenated aliphatic compounds, leading to the formation of the corresponding primary alcohols, halide ions and protons. This chain is Haloalkane dehalogenase, found in Agrobacterium fabrum (strain C58 / ATCC 33970) (Agrobacterium tumefaciens (strain C58)).